We begin with the raw amino-acid sequence, 103 residues long: Large ribosomal subunit protein uL24 (103 aa).

It belongs to the universal ribosomal protein uL24 family. Part of the 50S ribosomal subunit.

One of two assembly initiator proteins, it binds directly to the 5'-end of the 23S rRNA, where it nucleates assembly of the 50S subunit. In terms of biological role, one of the proteins that surrounds the polypeptide exit tunnel on the outside of the subunit. The polypeptide is Large ribosomal subunit protein uL24 (Synechococcus sp. (strain CC9311)).